Reading from the N-terminus, the 1252-residue chain is DNA-directed RNA polymerase subunit beta (1252 aa).

The protein belongs to the RNA polymerase beta chain family. As to quaternary structure, the RNAP catalytic core consists of 2 alpha, 1 beta, 1 beta' and 1 omega subunit. When a sigma factor is associated with the core the holoenzyme is formed, which can initiate transcription.

It carries out the reaction RNA(n) + a ribonucleoside 5'-triphosphate = RNA(n+1) + diphosphate. DNA-dependent RNA polymerase catalyzes the transcription of DNA into RNA using the four ribonucleoside triphosphates as substrates. In Chlamydia muridarum (strain MoPn / Nigg), this protein is DNA-directed RNA polymerase subunit beta.